We begin with the raw amino-acid sequence, 123 residues long: Urotensin-2 (123 aa).

An N-terminal signal peptide occupies residues 1–20 (MDRVPFCCLLFIGLLNPLLS). 2 consecutive propeptides follow at residues 21-104 (LPVT…LART) and 107-109 (QHK). Residues 57–88 (RQTMGTEAGESPGEAGPSTETPTPRGSMRKAF) are disordered. Residues Cys-117 and Cys-122 are joined by a disulfide bond.

It belongs to the urotensin-2 family. As to expression, brain specific. Predominantly expressed in motoneurons of the brainstem and spinal cord.

Its subcellular location is the secreted. In terms of biological role, highly potent vasoconstrictor. This Mus musculus (Mouse) protein is Urotensin-2 (Uts2).